We begin with the raw amino-acid sequence, 523 residues long: GMP synthase [glutamine-hydrolyzing] (523 aa).

A Glutamine amidotransferase type-1 domain is found at 8–205 (KILILDFGSQ…VVGICGCECK (198 aa)). The active-site Nucleophile is the C85. Residues H179 and E181 contribute to the active site. Residues 206–398 (WTAENIIEDA…LGLPAEMLNR (193 aa)) enclose the GMPS ATP-PPase domain. Residue 233 to 239 (SGGVDSS) participates in ATP binding.

As to quaternary structure, homodimer.

It catalyses the reaction XMP + L-glutamine + ATP + H2O = GMP + L-glutamate + AMP + diphosphate + 2 H(+). Its pathway is purine metabolism; GMP biosynthesis; GMP from XMP (L-Gln route): step 1/1. In terms of biological role, catalyzes the synthesis of GMP from XMP. This Actinobacillus pleuropneumoniae serotype 3 (strain JL03) protein is GMP synthase [glutamine-hydrolyzing].